A 246-amino-acid polypeptide reads, in one-letter code: Small ribosomal subunit protein uS2 (246 aa).

This sequence belongs to the universal ribosomal protein uS2 family.

The protein is Small ribosomal subunit protein uS2 of Lachnoclostridium phytofermentans (strain ATCC 700394 / DSM 18823 / ISDg) (Clostridium phytofermentans).